The following is a 391-amino-acid chain: Tryptophan synthase beta chain (391 aa).

Residue K86 is modified to N6-(pyridoxal phosphate)lysine.

This sequence belongs to the TrpB family. In terms of assembly, tetramer of two alpha and two beta chains. The cofactor is pyridoxal 5'-phosphate.

It catalyses the reaction (1S,2R)-1-C-(indol-3-yl)glycerol 3-phosphate + L-serine = D-glyceraldehyde 3-phosphate + L-tryptophan + H2O. It participates in amino-acid biosynthesis; L-tryptophan biosynthesis; L-tryptophan from chorismate: step 5/5. The beta subunit is responsible for the synthesis of L-tryptophan from indole and L-serine. This chain is Tryptophan synthase beta chain, found in Vibrio metschnikovii.